The primary structure comprises 304 residues: N-acetyl-D-glucosamine kinase (304 aa).

Residues 4–11 (GLDIGGTK) and 133–140 (GFGGGFVL) each bind ATP. Residues His157, Cys178, Cys180, and Cys185 each contribute to the Zn(2+) site.

Belongs to the ROK (NagC/XylR) family. NagK subfamily.

It carries out the reaction N-acetyl-D-glucosamine + ATP = N-acetyl-D-glucosamine 6-phosphate + ADP + H(+). Its pathway is cell wall biogenesis; peptidoglycan recycling. Functionally, catalyzes the phosphorylation of N-acetyl-D-glucosamine (GlcNAc) derived from cell-wall degradation, yielding GlcNAc-6-P. The chain is N-acetyl-D-glucosamine kinase from Haemophilus influenzae (strain 86-028NP).